Here is a 207-residue protein sequence, read N- to C-terminus: Large ribosomal subunit protein uL4 (207 aa).

The segment at Glu56–Gly76 is disordered. A compositionally biased stretch (basic residues) spans Gly60 to Gly71.

The protein belongs to the universal ribosomal protein uL4 family. In terms of assembly, part of the 50S ribosomal subunit.

In terms of biological role, one of the primary rRNA binding proteins, this protein initially binds near the 5'-end of the 23S rRNA. It is important during the early stages of 50S assembly. It makes multiple contacts with different domains of the 23S rRNA in the assembled 50S subunit and ribosome. Forms part of the polypeptide exit tunnel. This Desulfitobacterium hafniense (strain DSM 10664 / DCB-2) protein is Large ribosomal subunit protein uL4.